Reading from the N-terminus, the 121-residue chain is Large ribosomal subunit protein uL14 (121 aa).

The protein belongs to the universal ribosomal protein uL14 family. Part of the 50S ribosomal subunit. Forms a cluster with proteins L3 and L19. In the 70S ribosome, L14 and L19 interact and together make contacts with the 16S rRNA in bridges B5 and B8.

Binds to 23S rRNA. Forms part of two intersubunit bridges in the 70S ribosome. In Synechococcus sp. (strain RCC307), this protein is Large ribosomal subunit protein uL14.